The sequence spans 130 residues: Classical arabinogalactan protein 7 (130 aa).

An N-terminal signal peptide occupies residues 1 to 21 (MNSKIIEAFFIVALFTTSCLA). Q22 bears the Pyrrolidone carboxylic acid mark. The segment at 22 to 108 (QAPAPSPTTT…DASAPPPNAA (87 aa)) is disordered. Residues P24, P26, P28, P35, and P36 each carry the 4-hydroxyproline modification. O-linked (Ara...) hydroxyproline glycosylation is found at P24, P26, P28, P35, and P36. Residues 33–68 (TPPPVATPPPAATPAPTTTPPPAVSPAPTSSPPSSA) are compositionally biased toward pro residues. N106 carries GPI-anchor amidated asparagine lipidation. A propeptide spans 107–130 (AALTNKAFVVGSLVAAIIYAVVLA) (removed in mature form).

Belongs to the classical AGP family. In terms of processing, O-glycosylated on hydroxyprolines; noncontiguous hydroxylproline residues are glycosylated with arabinogalactan.

Its subcellular location is the cell membrane. Functionally, proteoglycan that seems to be implicated in diverse developmental roles such as differentiation, cell-cell recognition, embryogenesis and programmed cell death. In Arabidopsis thaliana (Mouse-ear cress), this protein is Classical arabinogalactan protein 7 (AGP7).